Here is a 299-residue protein sequence, read N- to C-terminus: Homoserine kinase (299 aa).

88 to 98 serves as a coordination point for ATP; the sequence is PLGRGLGSSAT.

This sequence belongs to the GHMP kinase family. Homoserine kinase subfamily.

The protein localises to the cytoplasm. It carries out the reaction L-homoserine + ATP = O-phospho-L-homoserine + ADP + H(+). The protein operates within amino-acid biosynthesis; L-threonine biosynthesis; L-threonine from L-aspartate: step 4/5. Functionally, catalyzes the ATP-dependent phosphorylation of L-homoserine to L-homoserine phosphate. The polypeptide is Homoserine kinase (Gloeobacter violaceus (strain ATCC 29082 / PCC 7421)).